A 266-amino-acid polypeptide reads, in one-letter code: Hydroxyethylthiazole kinase (266 aa).

Residue M45 participates in substrate binding. ATP is bound by residues K121 and S167. G194 contributes to the substrate binding site.

The protein belongs to the Thz kinase family. The cofactor is Mg(2+).

It carries out the reaction 5-(2-hydroxyethyl)-4-methylthiazole + ATP = 4-methyl-5-(2-phosphooxyethyl)-thiazole + ADP + H(+). It participates in cofactor biosynthesis; thiamine diphosphate biosynthesis; 4-methyl-5-(2-phosphoethyl)-thiazole from 5-(2-hydroxyethyl)-4-methylthiazole: step 1/1. Catalyzes the phosphorylation of the hydroxyl group of 4-methyl-5-beta-hydroxyethylthiazole (THZ). In Methanocella arvoryzae (strain DSM 22066 / NBRC 105507 / MRE50), this protein is Hydroxyethylthiazole kinase.